The chain runs to 424 residues: MKSYFCVTPTGCLKTHTRPRIVPKHSKKCLRTYSRPRSSLSDSEGWCVVLPRDGGGRKRKADGSQGRPSNNPGRPSRKWTEKTIAAPPQGFFSRRDNGYWVPKSPEKKYVPKNLPRNMDGKKTYKDALTSPAKIQIKPTPESILLAQKIQNSTFKSRGKVTLSQTSLPLVNRFQELQLNTLLEPVEESTPFGVNDKRAQHLFCKKVERKVGRTTMLVCPITGTESHIDVKRGISARIVDSMASVVHTDKLPEYERGHVVIKNVSRTKRVCTPVPFIGTFSDRAIRVECDDHTDELASASSVPSIWKPSKKQHAVPISSSNEMGSAVGTKPDWYTPVKTCTHRQYQKVQRVFLDAMNIMRTLRFHIGPRELRETWVKCWLQVHKKNVAFPGWMITPLLSGTVPCAQEFFLPLAGENRGFVTVCQA.

The disordered stretch occupies residues 51–83 (PRDGGGRKRKADGSQGRPSNNPGRPSRKWTEKT).

Belongs to the nepovirus satellite RNA 48 kDa protein family.

The chain is Satellite RNA 48 kDa protein from Tomato black ring virus (strain L) (TBRV).